The following is a 1043-amino-acid chain: tRNA wybutosine-synthesizing protein 2/3/4 (1043 aa).

Residues 1–233 (MEFDRRKAAA…PVLQNGAKHG (233 aa)) are tRNA wybutosine-synthesizing protein 3 homolog. The interval 53–75 (RVSVLAQPPPPQQADPGGAKTKK) is disordered. Kelch repeat units follow at residues 360-410 (DIYV…AVDR), 412-460 (VYVF…SYGS), 461-510 (KLFL…IYKD), and 512-559 (LGIL…VIID). A tRNA wybutosine-synthesizing protein 2 homolog region spans residues 700–1041 (QPDDSCVFEE…RHLVVDVKCR (342 aa)). S-adenosyl-L-methionine is bound by residues Lys-874 and 942 to 943 (DN).

The protein in the C-terminal section; belongs to the class I-like SAM-binding methyltransferase superfamily. TRM5/TYW2 family. This sequence in the N-terminal section; belongs to the TYW3 family.

It catalyses the reaction 4-demethyl-7-[(3S)-3-amino-3-carboxypropyl]wyosine(37) in tRNA(Phe) + S-adenosyl-L-methionine = 7-[(3S)-3-amino-3-carboxypropyl]wyosine(37) in tRNA(Phe) + S-adenosyl-L-homocysteine + H(+). It carries out the reaction 4-demethylwyosine(37) in tRNA(Phe) + S-adenosyl-L-methionine = 4-demethyl-7-[(3S)-3-amino-3-carboxypropyl]wyosine(37) in tRNA(Phe) + S-methyl-5'-thioadenosine + H(+). Its pathway is tRNA modification; wybutosine-tRNA(Phe) biosynthesis. In terms of biological role, S-adenosyl-L-methionine-dependent transferase that acts as a component of the wybutosine biosynthesis pathway. Wybutosine is a hyper modified guanosine with a tricyclic base found at the 3'-position adjacent to the anticodon of eukaryotic phenylalanine tRNA. This Oryza sativa subsp. japonica (Rice) protein is tRNA wybutosine-synthesizing protein 2/3/4.